Reading from the N-terminus, the 508-residue chain is Photosystem II CP47 reaction center protein (508 aa).

6 helical membrane-spanning segments follow: residues 21 to 36 (SVHI…WAGS), 101 to 115 (IVFS…IWHW), 140 to 156 (GIHL…FGAF), 203 to 218 (IAAG…FHLS), 237 to 252 (VLSS…AFIV), and 457 to 472 (TFAL…HGAR).

The protein belongs to the PsbB/PsbC family. PsbB subfamily. As to quaternary structure, PSII is composed of 1 copy each of membrane proteins PsbA, PsbB, PsbC, PsbD, PsbE, PsbF, PsbH, PsbI, PsbJ, PsbK, PsbL, PsbM, PsbT, PsbX, PsbY, PsbZ, Psb30/Ycf12, at least 3 peripheral proteins of the oxygen-evolving complex and a large number of cofactors. It forms dimeric complexes. Requires Binds multiple chlorophylls. PSII binds additional chlorophylls, carotenoids and specific lipids. as cofactor.

The protein resides in the plastid. It localises to the chloroplast thylakoid membrane. One of the components of the core complex of photosystem II (PSII). It binds chlorophyll and helps catalyze the primary light-induced photochemical processes of PSII. PSII is a light-driven water:plastoquinone oxidoreductase, using light energy to abstract electrons from H(2)O, generating O(2) and a proton gradient subsequently used for ATP formation. The polypeptide is Photosystem II CP47 reaction center protein (Pinus thunbergii (Japanese black pine)).